A 656-amino-acid chain; its full sequence is Phosphoprotein 85 (656 aa).

Disordered regions lie at residues 1–174 (MSSR…EGDE) and 615–656 (NGNH…EYCC). Basic and acidic residues predominate over residues 46-55 (SATEDLDRME). Low complexity-rich tracts occupy residues 59–70 (SPYSVSSDAPSS) and 140–160 (DNSSSGGSSSRTTSNSSRSTS). A compositionally biased stretch (pro residues) spans 625–634 (SPPPPLPPRD). Positions 635–656 (YPQRDERDRHRRDRRDSGEYCC) are enriched in basic and acidic residues.

The protein belongs to the herpesviridae pp85 family. Post-translationally, phosphorylated.

The protein localises to the virion tegument. The protein resides in the host cytoplasm. The protein is Phosphoprotein 85 (UL25) of Homo sapiens (Human).